Reading from the N-terminus, the 362-residue chain is Solute carrier family 25 member 3 (362 aa).

Residues 1 to 49 (MFSSVAHLARANPFNTPHLQLVHDGLGDLRSSSPGPTGQPRRPRNLAAA) constitute a mitochondrion transit peptide. The Mitochondrial intermembrane portion of the chain corresponds to 50–63 (AVEEQYSCDYGSGR). Solcar repeat units follow at residues 63–147 (RFFI…FKVL), 160–244 (WRTS…TVEA), and 261–339 (EQLV…VKVY). A helical membrane pass occupies residues 64 to 86 (FFILCGLGGIISCGTTHTALVPL). At 87–121 (DLVKCRMQVDPQKYKGIFNGFSVTLKEDGVRGLAK) the chain is on the mitochondrial matrix side. Residue Lys-99 is modified to N6-acetyllysine. The residue at position 112 (Lys-112) is an N6-methyllysine. Residues 122-141 (GWAPTFLGYSMQGLCKFGFY) traverse the membrane as a helical segment. Residues 142 to 161 (EVFKVLYSNMLGEENTYLWR) lie on the Mitochondrial intermembrane side of the membrane. The chain crosses the membrane as a helical span at residues 162–183 (TSLYLAASASAEFFADIALAPM). Topologically, residues 184-218 (EAAKVRIQTQPGYANTLRDAAPKMYKEEGLKAFYK) are mitochondrial matrix. Tyr-196 is modified (phosphotyrosine). Lys-209 carries the post-translational modification N6-acetyllysine. The helical transmembrane segment at 219–238 (GVAPLWMRQIPYTMMKFACF) threads the bilayer. The Mitochondrial intermembrane segment spans residues 239–261 (ERTVEALYKFVVPKPRSECSKPE). A helical membrane pass occupies residues 262–284 (QLVVTFVAGYIAGVFCAIVSHPA). The Mitochondrial matrix portion of the chain corresponds to 285–314 (DSVVSVLNKEKGSSASLVLKRLGFKGVWKG). A helical transmembrane segment spans residues 315–333 (LFARIIMIGTLTALQWFIY). Over 334-362 (DSVKVYFRLPRPPPPEMPESLKKKLGLTQ) the chain is Mitochondrial intermembrane.

The protein belongs to the mitochondrial carrier (TC 2.A.29) family. As to quaternary structure, interacts with PPIF; the interaction is impaired by CsA.

The protein localises to the mitochondrion inner membrane. The catalysed reaction is phosphate(in) + H(+)(in) = phosphate(out) + H(+)(out). In terms of biological role, inorganic ion transporter that transports phosphate or copper ions across the mitochondrial inner membrane into the matrix compartment. Mediates proton-coupled symport of phosphate ions necessary for mitochondrial oxidative phosphorylation of ADP to ATP. Transports copper ions probably in the form of anionic copper(I) complexes to maintain mitochondrial matrix copper pool and to supply copper for cytochrome C oxidase complex assembly. May also play a role in regulation of the mitochondrial permeability transition pore (mPTP). This is Solute carrier family 25 member 3 from Homo sapiens (Human).